The following is a 663-amino-acid chain: Polyunsaturated fatty acid lipoxygenase ALOX15 (663 aa).

Residues 2 to 115 (GVYRVCVSTG…VQSLPVGTGC (114 aa)) enclose the PLAT domain. Positions 116-663 (TTVGDPQGLF…PSIVENSVAI (548 aa)) constitute a Lipoxygenase domain. Fe cation contacts are provided by H361, H366, H541, H545, and I663.

It belongs to the lipoxygenase family. As to quaternary structure, interacts with PEBP1; in response to IL13/interleukin-13, prevents the interaction of PEBP1 with RAF1 to activate the ERK signaling cascade. It depends on Fe cation as a cofactor. Detected in reticulocytes (at protein level).

Its subcellular location is the cytoplasm. It is found in the cytosol. It localises to the cell membrane. The protein localises to the lipid droplet. It catalyses the reaction (5Z,8Z,11Z,14Z)-eicosatetraenoate + O2 = (12S)-hydroperoxy-(5Z,8Z,10E,14Z)-eicosatetraenoate. It carries out the reaction (5Z,8Z,11Z,14Z)-eicosatetraenoate + O2 = (15S)-hydroperoxy-(5Z,8Z,11Z,13E)-eicosatetraenoate. The catalysed reaction is (9Z,12Z)-octadecadienoate + O2 = (13S)-hydroperoxy-(9Z,11E)-octadecadienoate. The enzyme catalyses (5Z,8Z,11Z,14Z)-eicosatetraenoate + 2 O2 = (14R,15S)-dihydroperoxy-(5Z,8Z,10E,12E)-eicosatetraenoate. It catalyses the reaction (5Z,8Z,11Z,14Z)-eicosatetraenoate + 2 O2 = (8S,15S)-dihydroperoxy-(5Z,9E,11Z,13E)-eicosatetraenoate. It carries out the reaction (14S,15R)-epoxy-(5Z,8Z,11Z)-eicosatrienoate + O2 = (8S)-hydroperoxy-(14S,15R)-epoxy-(5Z,9E,11Z)-eicosatrienoate. The catalysed reaction is (14S,15R)-epoxy-(5Z,8Z,11Z)-eicosatrienoate + O2 = (12S)-hydroperoxy-(14S,15R)-epoxy-(5Z,8Z,10E)-eicosatrienoate. The enzyme catalyses (14R,15S)-epoxy-(5Z,8Z,11Z)-eicosatrienoate + O2 = (5S)-hydroperoxy-(14R,15S)-epoxy-(6E,8Z,11Z)-eicosatrienoate. It catalyses the reaction (14R,15S)-epoxy-(5Z,8Z,11Z)-eicosatrienoate + O2 = (12S)-hydroperoxy-(14R,15S)-epoxy-(5Z,8Z,10E)-eicosatrienoate. It carries out the reaction (15R)-hydroperoxy-(5Z,8Z,11Z,13E)-eicosatetraenoate = 15-oxo-(5Z,8Z,11Z,13E)-eicosatetraenoate + H2O. The catalysed reaction is (15S)-hydroperoxy-(5Z,8Z,11Z,13E)-eicosatetraenoate = (14S,15S)-epoxy-(5Z,8Z,10E,12E)-eicosatetraenoate + H2O. The enzyme catalyses (12S)-hydroperoxy-(5Z,8Z,10E,14Z)-eicosatetraenoate = (8S)-hydroxy-(11S,12S)-epoxy-(5Z,9E,14Z)-eicosatrienoate. It catalyses the reaction (4Z,7Z,10Z,13Z,16Z)-docosapentaenoate + O2 = 14-hydroperoxy-(4Z,7Z,10Z,12E,16Z)-docosapentaenoate. It carries out the reaction (7Z,10Z,13Z,16Z,19Z)-docosapentaenoate + O2 = 14-hydroperoxy-(7Z,10Z,12E,16Z,19Z)-docosapentaenoate. The catalysed reaction is (4Z,7Z,10Z,13Z,16Z,19Z)-docosahexaenoate + O2 = (14S)-hydroperoxy-(4Z,7Z,10Z,12E,16Z,19Z)-docosahexaenoate. The enzyme catalyses (4Z,7Z,10Z,13Z,16Z,19Z)-docosahexaenoate + O2 = (17S)-hydroperoxy-(4Z,7Z,10Z,13Z,15E,19Z)-docosahexaenoate. It catalyses the reaction (7S)-hydroperoxy-(4Z,8E,10Z,13Z,16Z,19Z)-docosahexaenoate + O2 = (7S,14S)-dihydroperoxy-(4Z,8E,10Z,12E,16Z,19Z)-docosahexaenoate. It carries out the reaction (7S)-hydroperoxy-(4Z,8E,10Z,13Z,16Z,19Z)-docosahexaenoate + O2 = (7S,17S)-dihydroperoxy-(4Z,8E,10Z,13Z,15E,19Z)-docosahexaenoate. The catalysed reaction is (4Z,7Z,10Z,13Z,16Z,19Z)-docosahexaenoate + O2 = (11S)-hydroperoxy-(4Z,7Z,9E,13Z,16Z,19Z)-docosahexaenoate. The enzyme catalyses N-(5Z,8Z,11Z,14Z)-eicosatetraenoyl-taurine + O2 = N-(15S)-hydroperoxy-(5Z,8Z,11Z,13E)-eicosatetraenoyl-taurine. It catalyses the reaction N-(5Z,8Z,11Z,14Z)-eicosatetraenoyl-gamma-aminobutanoate + O2 = N-(15S)-hydroperoxy-(5Z,8Z,11Z,13E)-eicosatetraenoyl-gamma-aminobutanoate. It carries out the reaction N-(5Z,8Z,11Z,14Z)-eicosatetraenoyl-glycine + O2 = N-(15S)-hydroperoxy-(5Z,8Z,11Z,13E)-eicosatetraenoyl-glycine. The catalysed reaction is N-(5Z,8Z,11Z,14Z)-eicosatetraenoyl-L-alanine + O2 = N-(15S)-hydroperoxy-(5Z,8Z,11Z,13E)-eicosatetraenoyl-alanine. The enzyme catalyses N-(5Z,8Z,11Z,14Z)-eicosatetraenoyl-taurine + O2 = N-(12S)-hydroperoxy-(5Z,8Z,10E,14Z)-eicosatetraenoyl-taurine. It catalyses the reaction N-(5Z,8Z,11Z,14Z)-eicosatetraenoyl-gamma-aminobutanoate + O2 = N-(12S)-hydroperoxy-(5Z,8Z,10E,14Z)-eicosatetraenoyl-gamma-aminobutanoate. It carries out the reaction N-(5Z,8Z,11Z,14Z)-eicosatetraenoyl-glycine + O2 = N-(12S)-hydroperoxy-(5Z,8Z,10E,14Z)-eicosatetraenoyl-glycine. The catalysed reaction is N-(5Z,8Z,11Z,14Z)-eicosatetraenoyl-L-alanine + O2 = N-(12S)-hydroperoxy-(5Z,8Z,10E,14Z)-eicosatetraenoyl-alanine. It functions in the pathway lipid metabolism; hydroperoxy eicosatetraenoic acid biosynthesis. Non-heme iron-containing dioxygenase that catalyzes the stereo-specific peroxidation of free and esterified polyunsaturated fatty acids generating a spectrum of bioactive lipid mediators. It inserts peroxyl groups at C12 or C15 of arachidonate ((5Z,8Z,11Z,14Z)-eicosatetraenoate) producing both 12-hydroperoxyeicosatetraenoate/12-HPETE and 15-hydroperoxyeicosatetraenoate/15-HPETE. It may then act on 12-HPETE to produce hepoxilins, which may show pro-inflammatory properties. Can also peroxidize linoleate ((9Z,12Z)-octadecadienoate) to 13-hydroperoxyoctadecadienoate. May participate in the sequential oxidations of DHA ((4Z,7Z,10Z,13Z,16Z,19Z)-docosahexaenoate) to generate specialized pro-resolving mediators (SPMs)like resolvin D5 ((7S,17S)-diHPDHA) and (7S,14S)-diHPDHA, that actively down-regulate the immune response and have anti-aggregation properties with platelets. Can convert epoxy fatty acids to hydroperoxy-epoxides derivatives followed by an intramolecular nucleophilic substitution leading to the formation of monocyclic endoperoxides. Plays an important role during the maintenance of self-tolerance by peroxidizing membrane-bound phosphatidylethanolamine which can then signal the sorting process for clearance of apoptotic cells during inflammation and prevent an autoimmune response. In addition to its role in the immune and inflammatory responses, this enzyme may play a role in epithelial wound healing in the cornea through production of lipoxin A4 (LXA(4)) and docosahexaenoic acid-derived neuroprotectin D1 (NPD1; 10R,17S-HDHA), both lipid autacoids exhibit anti-inflammatory and neuroprotective properties. Furthermore, it may regulate actin polymerization which is crucial for several biological processes such as the phagocytosis of apoptotic cells. It is also implicated in the generation of endogenous ligands for peroxisome proliferator activated receptor (PPAR-gamma), hence modulating macrophage development and function. It may also exert a negative effect on skeletal development by regulating bone mass through this pathway. As well as participates in ER stress and downstream inflammation in adipocytes, pancreatic islets, and liver. Finally, it is also involved in the cellular response to IL13/interleukin-13. The polypeptide is Polyunsaturated fatty acid lipoxygenase ALOX15 (Oryctolagus cuniculus (Rabbit)).